The following is a 335-amino-acid chain: Cathepsin B (335 aa).

An N-terminal signal peptide occupies residues 1–19 (MWQLLATLSCLLVLTSARS). Positions 20–79 (SLHFPPLSDEMVNYVNKQNTTWKAGHNFYNVDLSYVKKLCGAILGGPKLPQRDAFAADMV) are cleaved as a propeptide — activation peptide. Disulfide bonds link C93–C122, C105–C150, C141–C207, C142–C146, C179–C211, and C187–C198. Residue C108 is part of the active site. The N-linked (GlcNAc...) asparagine glycan is linked to N192. At K220 the chain carries N6-acetyllysine. Catalysis depends on residues H278 and N298. Positions 333–335 (HQH) are excised as a propeptide.

It belongs to the peptidase C1 family. In terms of assembly, dimer of a heavy chain and a light chain cross-linked by a disulfide bond. Interacts with SRPX2. Directly interacts with SHKBP1.

Its subcellular location is the lysosome. The protein resides in the melanosome. It is found in the secreted. The protein localises to the extracellular space. It localises to the apical cell membrane. The catalysed reaction is Hydrolysis of proteins with broad specificity for peptide bonds. Preferentially cleaves -Arg-Arg-|-Xaa bonds in small molecule substrates (thus differing from cathepsin L). In addition to being an endopeptidase, shows peptidyl-dipeptidase activity, liberating C-terminal dipeptides.. Its function is as follows. Thiol protease which is believed to participate in intracellular degradation and turnover of proteins. Cleaves matrix extracellular phosphoglycoprotein MEPE. Involved in the solubilization of cross-linked TG/thyroglobulin in the thyroid follicle lumen. Has also been implicated in tumor invasion and metastasis. The chain is Cathepsin B (CTSB) from Ovis aries (Sheep).